The following is a 253-amino-acid chain: Triosephosphate isomerase (253 aa).

Residue 9 to 11 (NWK) participates in substrate binding. H94 functions as the Electrophile in the catalytic mechanism. The Proton acceptor role is filled by E163. Residues G169, S209, and 230 to 231 (GG) each bind substrate.

The protein belongs to the triosephosphate isomerase family. As to quaternary structure, homodimer.

It localises to the cytoplasm. The catalysed reaction is D-glyceraldehyde 3-phosphate = dihydroxyacetone phosphate. It participates in carbohydrate biosynthesis; gluconeogenesis. The protein operates within carbohydrate degradation; glycolysis; D-glyceraldehyde 3-phosphate from glycerone phosphate: step 1/1. Its function is as follows. Involved in the gluconeogenesis. Catalyzes stereospecifically the conversion of dihydroxyacetone phosphate (DHAP) to D-glyceraldehyde-3-phosphate (G3P). This Dehalococcoides mccartyi (strain CBDB1) protein is Triosephosphate isomerase.